The primary structure comprises 201 residues: Dephospho-CoA kinase (201 aa).

Positions 4 to 201 (IIGITGGIAS…LEGGRQDDRD (198 aa)) constitute a DPCK domain. 12–17 (ASGKST) provides a ligand contact to ATP.

The protein belongs to the CoaE family.

Its subcellular location is the cytoplasm. The catalysed reaction is 3'-dephospho-CoA + ATP = ADP + CoA + H(+). Its pathway is cofactor biosynthesis; coenzyme A biosynthesis; CoA from (R)-pantothenate: step 5/5. Catalyzes the phosphorylation of the 3'-hydroxyl group of dephosphocoenzyme A to form coenzyme A. In Streptococcus pneumoniae serotype 4 (strain ATCC BAA-334 / TIGR4), this protein is Dephospho-CoA kinase.